A 127-amino-acid polypeptide reads, in one-letter code: Small ribosomal subunit protein eS8 (127 aa).

The protein belongs to the eukaryotic ribosomal protein eS8 family. Part of the 30S ribosomal subunit.

This Pyrococcus abyssi (strain GE5 / Orsay) protein is Small ribosomal subunit protein eS8 (rps8e).